A 206-amino-acid chain; its full sequence is Methylthioribulose-1-phosphate dehydratase (206 aa).

Zn(2+) is bound by residues His96 and His98.

This sequence belongs to the aldolase class II family. MtnB subfamily. Zn(2+) serves as cofactor.

The enzyme catalyses 5-(methylsulfanyl)-D-ribulose 1-phosphate = 5-methylsulfanyl-2,3-dioxopentyl phosphate + H2O. Its pathway is amino-acid biosynthesis; L-methionine biosynthesis via salvage pathway; L-methionine from S-methyl-5-thio-alpha-D-ribose 1-phosphate: step 2/6. In terms of biological role, catalyzes the dehydration of methylthioribulose-1-phosphate (MTRu-1-P) into 2,3-diketo-5-methylthiopentyl-1-phosphate (DK-MTP-1-P). This chain is Methylthioribulose-1-phosphate dehydratase, found in Azotobacter vinelandii (strain DJ / ATCC BAA-1303).